The sequence spans 117 residues: Large ribosomal subunit protein bL19 (117 aa).

Belongs to the bacterial ribosomal protein bL19 family.

This protein is located at the 30S-50S ribosomal subunit interface and may play a role in the structure and function of the aminoacyl-tRNA binding site. In Thioalkalivibrio sulfidiphilus (strain HL-EbGR7), this protein is Large ribosomal subunit protein bL19.